Consider the following 180-residue polypeptide: MSRIGRLPIAIPNGVTVTVSPENVVTVKGPKGELTKTMHPNIDIAIEENSVIVTRKNDEKQNRSLHGLTRSLVNNMVVGVTEGYEKKLELVGVGYRAQLQGKKLVLNLGFSHPVEIEAKEGVEFQLDGTNKITVKGIDKELVGAVASDIRSWRKPEPYKGKGIKYENEAIRRKEGKTGKK.

The protein belongs to the universal ribosomal protein uL6 family. As to quaternary structure, part of the 50S ribosomal subunit.

Functionally, this protein binds to the 23S rRNA, and is important in its secondary structure. It is located near the subunit interface in the base of the L7/L12 stalk, and near the tRNA binding site of the peptidyltransferase center. The chain is Large ribosomal subunit protein uL6 from Clostridium tetani (strain Massachusetts / E88).